Here is a 219-residue protein sequence, read N- to C-terminus: 7-carboxy-7-deazaguanine synthase (219 aa).

Substrate is bound by residues 22 to 24 (IQG) and Arg37. One can recognise a Radical SAM core domain in the interval 28-219 (LVGLPSVFIR…PQVHKCFDLK (192 aa)). Positions 41, 45, and 48 each coordinate [4Fe-4S] cluster. A substrate-binding site is contributed by Thr81. S-adenosyl-L-methionine is bound by residues Gly83 and 130-132 (SPK).

The protein belongs to the radical SAM superfamily. 7-carboxy-7-deazaguanine synthase family. In terms of assembly, homodimer. The cofactor is [4Fe-4S] cluster. Requires S-adenosyl-L-methionine as cofactor. Mg(2+) is required as a cofactor.

The catalysed reaction is 6-carboxy-5,6,7,8-tetrahydropterin + H(+) = 7-carboxy-7-deazaguanine + NH4(+). It participates in purine metabolism; 7-cyano-7-deazaguanine biosynthesis. Catalyzes the complex heterocyclic radical-mediated conversion of 6-carboxy-5,6,7,8-tetrahydropterin (CPH4) to 7-carboxy-7-deazaguanine (CDG), a step common to the biosynthetic pathways of all 7-deazapurine-containing compounds. The protein is 7-carboxy-7-deazaguanine synthase of Aquifex aeolicus (strain VF5).